The primary structure comprises 395 residues: Ankyrin repeat domain-containing protein 65 (395 aa).

ANK repeat units lie at residues Gln-52–Glu-81, Ala-85–Ala-114, Ala-118–Ala-147, Ala-151–Thr-180, Arg-185–Arg-212, Leu-213–Ala-241, Val-245–Leu-274, His-278–Ser-307, Leu-311–Ala-340, and Leu-344–Leu-373.

The chain is Ankyrin repeat domain-containing protein 65 (ANKRD65) from Bos taurus (Bovine).